Reading from the N-terminus, the 320-residue chain is Glycerol-3-phosphate dehydrogenase [NAD(P)+] (320 aa).

3 residues coordinate NADPH: phenylalanine 11, arginine 30, and lysine 102. Residues lysine 102, glycine 130, and serine 132 each contribute to the sn-glycerol 3-phosphate site. Alanine 134 is an NADPH binding site. Residues lysine 185, aspartate 238, serine 248, arginine 249, and asparagine 250 each coordinate sn-glycerol 3-phosphate. The Proton acceptor role is filled by lysine 185. Arginine 249 lines the NADPH pocket. Residue glutamate 270 participates in NADPH binding.

This sequence belongs to the NAD-dependent glycerol-3-phosphate dehydrogenase family.

It localises to the cytoplasm. It carries out the reaction sn-glycerol 3-phosphate + NAD(+) = dihydroxyacetone phosphate + NADH + H(+). The enzyme catalyses sn-glycerol 3-phosphate + NADP(+) = dihydroxyacetone phosphate + NADPH + H(+). It participates in membrane lipid metabolism; glycerophospholipid metabolism. Functionally, catalyzes the reduction of the glycolytic intermediate dihydroxyacetone phosphate (DHAP) to sn-glycerol 3-phosphate (G3P), the key precursor for phospholipid synthesis. This is Glycerol-3-phosphate dehydrogenase [NAD(P)+] from Ruegeria sp. (strain TM1040) (Silicibacter sp.).